We begin with the raw amino-acid sequence, 512 residues long: Ribose import ATP-binding protein RbsA 1 (512 aa).

ABC transporter domains are found at residues 8 to 244 and 254 to 502; these read FRME…IGRE and AHRG…LNIA. 40-47 lines the ATP pocket; sequence GENGAGKS.

This sequence belongs to the ABC transporter superfamily. Ribose importer (TC 3.A.1.2.1) family. As to quaternary structure, the complex is composed of an ATP-binding protein (RbsA), two transmembrane proteins (RbsC) and a solute-binding protein (RbsB).

It localises to the cell inner membrane. It catalyses the reaction D-ribose(out) + ATP + H2O = D-ribose(in) + ADP + phosphate + H(+). Its function is as follows. Part of the ABC transporter complex RbsABC involved in ribose import. Responsible for energy coupling to the transport system. The protein is Ribose import ATP-binding protein RbsA 1 of Rhizobium johnstonii (strain DSM 114642 / LMG 32736 / 3841) (Rhizobium leguminosarum bv. viciae).